The primary structure comprises 71 residues: Sec-independent protein translocase protein TatA (71 aa).

A helical transmembrane segment spans residues 9–29 (LLLILAIVVILFGASRLPALG). The tract at residues 43-71 (FGGEDEKPTASGNGSTPTQSSSDQGSKQA) is disordered. The segment covering 52–71 (ASGNGSTPTQSSSDQGSKQA) has biased composition (polar residues).

This sequence belongs to the TatA/E family. As to quaternary structure, the Tat system comprises two distinct complexes: a TatABC complex, containing multiple copies of TatA, TatB and TatC subunits, and a separate TatA complex, containing only TatA subunits. Substrates initially bind to the TatABC complex, which probably triggers association of the separate TatA complex to form the active translocon.

The protein localises to the cell inner membrane. Part of the twin-arginine translocation (Tat) system that transports large folded proteins containing a characteristic twin-arginine motif in their signal peptide across membranes. TatA could form the protein-conducting channel of the Tat system. In Anaeromyxobacter dehalogenans (strain 2CP-C), this protein is Sec-independent protein translocase protein TatA.